The chain runs to 311 residues: GTP cyclohydrolase MptA (311 aa).

It belongs to the GTP cyclohydrolase IV family. As to quaternary structure, homodimer. Fe(2+) is required as a cofactor.

It catalyses the reaction GTP + H2O = 7,8-dihydroneopterin 2',3'-cyclic phosphate + formate + diphosphate + H(+). It participates in cofactor biosynthesis; 5,6,7,8-tetrahydromethanopterin biosynthesis. In terms of biological role, converts GTP to 7,8-dihydro-D-neopterin 2',3'-cyclic phosphate, the first intermediate in the biosynthesis of coenzyme methanopterin. The protein is GTP cyclohydrolase MptA of Methanocorpusculum labreanum (strain ATCC 43576 / DSM 4855 / Z).